Reading from the N-terminus, the 153-residue chain is Transcriptional repressor NrdR 3 (153 aa).

The segment at 1–26 is disordered; sequence MRCPFCGHDDTQVKDSRPTEDNSAIR. Residues 3 to 34 fold into a zinc finger; sequence CPFCGHDDTQVKDSRPTEDNSAIRRRRSCPEC. A compositionally biased stretch (basic and acidic residues) spans 7-24; sequence GHDDTQVKDSRPTEDNSA. The 91-residue stretch at 49 to 139 folds into the ATP-cone domain; it reads LVVIKKDGGR…VYRNFREAKD (91 aa).

Belongs to the NrdR family. The cofactor is Zn(2+).

Functionally, negatively regulates transcription of bacterial ribonucleotide reductase nrd genes and operons by binding to NrdR-boxes. This chain is Transcriptional repressor NrdR 3, found in Paramagnetospirillum magneticum (strain ATCC 700264 / AMB-1) (Magnetospirillum magneticum).